The primary structure comprises 1009 residues: MKKKNWIYALIVTLIIIIAIVSMIFFVQTKYGDQSEKGSRSVSNKNNKIHIAIVNEDQPTTYNGKKVELGQAFIKRLANEKNYKFETVTRNVAESGLKNGGYQVMIVIPENFSKLAMQLDAKTPSKISLQYKTAVGQKEEVAKNTEKVVSNVLNDFNKNLVEIYLTSIIDNLHNAQKNVGAIMTREHGVNSKFSNYLLNPINDFPELFTDTLVNSISANKDITKWFQTYNKSLLSANSDTFRVNTDYNVSTLIEKQNSLFDEHNTAMDKMLQDYKSQKDSVELDNYINALKQMDSQIDQQSSMQDTGKEEYKQTVKENLDKLREIIQSQESPFSKGMIEDYRKQLTESLQDELANNKDLQDALNSIKMNNAQFAENLEKQLHDDIVKEPDTDTTFIYNMSKQDFIAAGLNEDEANKYEAIVKEAKRYKNEYNLKKPLAEHINLTDYDNQVAQDTSSLINDGVKVQRTETIKSNDINQLTVATDPHFNFEGDIKINGKKYDIKDQSVQLDTSNKEYKVEVNGVAKLKKDAEKDFLKDKTMHLQLLFGQANRQDEPNDKKTTSVVDVTLNHNLDGRLSKDALSQQLSALSRFDAHYKMYTDTKGREDKPFDNKRLIDMMVDQVINDMESFKDDKVAVLHQIDSMEENSDKLIDDILNNKKNTTKNKEDISKLIDQLENVKKTFAEEPQEPKIDKGKNDEFNTMSSNLDKEISRISEKSTQLLSDTQESKTIADSVSGQLNQLDNNVNKLHATGRALGVRANDLNRQMAKNDKDNELFAKEFKKVLQNSKDGDRQNQALKAFMSNPVQKKNLENVLANNGNTDVISPTLFVLLMYLLSMITAYIFYSYERAKGQMNFIKDDYSSKNHLWNNVITSGVIGTTGLVEGLIVGLIAMNKFHVLAGYRAKFILMVILTMMVFVLINTYLLRQVKSIGMFLMIAALGLYFVAMNNLKAAGQGVTNKISPLSYIDNMFFNYLNAEHPIGLALVILTVLVIIGFVLNMFIKHFKKERLI.

6 helical membrane-spanning segments follow: residues 7–27, 822–842, 869–889, 903–923, 928–948, and 979–999; these read IYAL…IFFV, ISPT…AYIF, VITS…VGLI, KFIL…TYLL, SIGM…MNNL, and IGLA…LNMF.

Belongs to the EsaA family. As to quaternary structure, homodimer. Interacts with EssB.

The protein localises to the cell membrane. In terms of biological role, component of the type VII secretion system (Ess). Provides together with EssB and other components such as EssC and EssE a secretion platform across the cytoplasmic membrane in the host. The protein is Type VII secretion system accessory factor EsaA of Staphylococcus aureus (strain MSSA476).